Reading from the N-terminus, the 111-residue chain is ATP-dependent Clp protease adapter protein ClpS (111 aa).

This sequence belongs to the ClpS family. Binds to the N-terminal domain of the chaperone ClpA.

Involved in the modulation of the specificity of the ClpAP-mediated ATP-dependent protein degradation. The chain is ATP-dependent Clp protease adapter protein ClpS from Leptospira interrogans serogroup Icterohaemorrhagiae serovar copenhageni (strain Fiocruz L1-130).